The following is a 373-amino-acid chain: T-protein (373 aa).

Residues 1–90 (MVAELTALRD…ESYSSENDKG (90 aa)) enclose the Chorismate mutase domain. The region spanning 99–361 (RPVVIVGGGG…DYAQRFQSES (263 aa)) is the Prephenate/arogenate dehydrogenase domain.

In the C-terminal section; belongs to the prephenate/arogenate dehydrogenase family.

It localises to the cytoplasm. It catalyses the reaction chorismate = prephenate. It carries out the reaction prephenate + NAD(+) = 3-(4-hydroxyphenyl)pyruvate + CO2 + NADH. The protein operates within amino-acid biosynthesis; L-tyrosine biosynthesis; (4-hydroxyphenyl)pyruvate from prephenate (NAD(+) route): step 1/1. It functions in the pathway metabolic intermediate biosynthesis; prephenate biosynthesis; prephenate from chorismate: step 1/1. The chain is T-protein (tyrA) from Escherichia coli (strain K12).